Consider the following 376-residue polypeptide: MARPKLHDFRRLVVKVGSSLLIDSGAGEVRADWLAALAADIAELHRGGRDVMIVSSGSIALGRSRLKLPRGALKLEESQAAAAVGQIALARTWSEVLGSHGIGAGQILVTLQDTEERRRYLNARSTIAKLLEWRAVPVINENDTVATNEIRYGDNDRLAARVATMASADLLILLSDIDGLYTAPPGSNPDAKLIPEVESVTAEIESMAGAAGSELSRGGMRTKIEAAKIATSAGTHMLIASGKIDHPLKAIAEGGPCTWFLTPANPVTARKRWIAGSLEPKGTLTIDAGAVSALRAGKSLLPAGVIRVDGQFARGDAVIVRGPDTHEIGRGLVAYDADDADRIKGRSSPDVMMILGISGRAEMIHRDDLVVGTAPG.

Lys15 is an ATP binding site. 3 residues coordinate substrate: Ser56, Asp143, and Asn155. Residue 175–176 (SD) coordinates ATP. In terms of domain architecture, PUA spans 281–358 (KGTLTIDAGA…PDVMMILGIS (78 aa)).

Belongs to the glutamate 5-kinase family.

It is found in the cytoplasm. It carries out the reaction L-glutamate + ATP = L-glutamyl 5-phosphate + ADP. It functions in the pathway amino-acid biosynthesis; L-proline biosynthesis; L-glutamate 5-semialdehyde from L-glutamate: step 1/2. Catalyzes the transfer of a phosphate group to glutamate to form L-glutamate 5-phosphate. This is Glutamate 5-kinase from Rhodopseudomonas palustris (strain BisB5).